Here is a 255-residue protein sequence, read N- to C-terminus: tRNA (guanine-N(1)-)-methyltransferase (255 aa).

S-adenosyl-L-methionine contacts are provided by residues Gly113 and 133–138; that span reads IGDYVL.

It belongs to the RNA methyltransferase TrmD family. As to quaternary structure, homodimer.

It localises to the cytoplasm. It catalyses the reaction guanosine(37) in tRNA + S-adenosyl-L-methionine = N(1)-methylguanosine(37) in tRNA + S-adenosyl-L-homocysteine + H(+). Functionally, specifically methylates guanosine-37 in various tRNAs. This is tRNA (guanine-N(1)-)-methyltransferase from Escherichia coli O127:H6 (strain E2348/69 / EPEC).